The primary structure comprises 533 residues: Bifunctional aspartate aminotransferase and L-aspartate beta-decarboxylase (533 aa).

Residues glycine 115 and asparagine 256 each coordinate L-aspartate. Lysine 315 bears the N6-(pyridoxal phosphate)lysine mark. Arginine 497 contacts L-aspartate.

Belongs to the class-I pyridoxal-phosphate-dependent aminotransferase family. Homododecamer. Pyridoxal 5'-phosphate is required as a cofactor.

It catalyses the reaction L-aspartate + H(+) = L-alanine + CO2. It carries out the reaction L-aspartate + 2-oxoglutarate = oxaloacetate + L-glutamate. Functionally, bifunctional enzyme that has both L-aspartate decarboxylase and transaminase activity. This chain is Bifunctional aspartate aminotransferase and L-aspartate beta-decarboxylase, found in Comamonas testosteroni (Pseudomonas testosteroni).